A 435-amino-acid polypeptide reads, in one-letter code: Kynurenine--oxoglutarate transaminase (435 aa).

The substrate site is built by Gly46 and Asn198. Lys262 is subject to N6-(pyridoxal phosphate)lysine. Position 413 (Arg413) interacts with substrate.

The protein belongs to the class-I pyridoxal-phosphate-dependent aminotransferase family. As to quaternary structure, homodimer. The cofactor is pyridoxal 5'-phosphate.

It is found in the cytoplasm. The enzyme catalyses L-kynurenine + 2-oxoglutarate = kynurenate + L-glutamate + H2O. It carries out the reaction 3-phenylpyruvate + L-glutamine = 2-oxoglutaramate + L-phenylalanine. The catalysed reaction is an S-substituted L-cysteine + H2O = a thiol + pyruvate + NH4(+). It participates in amino-acid degradation; L-kynurenine degradation; kynurenate from L-kynurenine: step 1/2. Catalyzes the irreversible transamination of the L-tryptophan metabolite L-kynurenine to form kynurenic acid (KA). Metabolizes the cysteine conjugates of certain halogenated alkenes and alkanes to form reactive metabolites. Catalyzes the beta-elimination of S-conjugates and Se-conjugates of L-(seleno)cysteine, resulting in the cleavage of the C-S or C-Se bond. The chain is Kynurenine--oxoglutarate transaminase (ccbl) from Dictyostelium discoideum (Social amoeba).